The primary structure comprises 456 residues: Arginine biosynthesis bifunctional protein ArgJ, mitochondrial (456 aa).

Substrate-binding residues include Thr-184, Lys-213, Thr-224, Glu-311, Asn-451, and Thr-456. Thr-224 functions as the Nucleophile in the catalytic mechanism.

This sequence belongs to the ArgJ family. As to quaternary structure, heterodimer of an alpha and a beta chain. In terms of processing, the alpha and beta chains are autoproteolytically processed from a single precursor protein within the mitochondrion.

It is found in the mitochondrion matrix. It catalyses the reaction N(2)-acetyl-L-ornithine + L-glutamate = N-acetyl-L-glutamate + L-ornithine. The catalysed reaction is L-glutamate + acetyl-CoA = N-acetyl-L-glutamate + CoA + H(+). The protein operates within amino-acid biosynthesis; L-arginine biosynthesis; L-ornithine and N-acetyl-L-glutamate from L-glutamate and N(2)-acetyl-L-ornithine (cyclic): step 1/1. Its pathway is amino-acid biosynthesis; L-arginine biosynthesis; N(2)-acetyl-L-ornithine from L-glutamate: step 1/4. In terms of biological role, catalyzes two activities which are involved in the cyclic version of arginine biosynthesis: the synthesis of acetylglutamate from glutamate and acetyl-CoA, and of ornithine by transacetylation between acetylornithine and glutamate. The sequence is that of Arginine biosynthesis bifunctional protein ArgJ, mitochondrial from Neosartorya fischeri (strain ATCC 1020 / DSM 3700 / CBS 544.65 / FGSC A1164 / JCM 1740 / NRRL 181 / WB 181) (Aspergillus fischerianus).